The chain runs to 347 residues: GMP reductase (347 aa).

108–131 (ADFDKMKQILALSPALKFICIDVA) serves as a coordination point for NADP(+). K(+)-binding residues include Gly181 and Gly183. Residue Cys186 is the Thioimidate intermediate of the active site. NADP(+) is bound at residue 216-239 (IVSDGGCSVPGDVAKAFGGGADFV).

It belongs to the IMPDH/GMPR family. GuaC type 1 subfamily. In terms of assembly, homotetramer.

The enzyme catalyses IMP + NH4(+) + NADP(+) = GMP + NADPH + 2 H(+). Catalyzes the irreversible NADPH-dependent deamination of GMP to IMP. It functions in the conversion of nucleobase, nucleoside and nucleotide derivatives of G to A nucleotides, and in maintaining the intracellular balance of A and G nucleotides. The protein is GMP reductase of Yersinia enterocolitica serotype O:8 / biotype 1B (strain NCTC 13174 / 8081).